The primary structure comprises 196 residues: MTWQNDYSRDYEVKNHMECQNRSDKYIWSPHDAYFYKGLSELIVDIDRLIYLSLEKIRKDFVFINLNTDSLTEFINRDNEWLSAVKGKQVVLIAARKSEALANYWYYNSNIRGVVYAGLSRDIRKELAYVINGRFLRKDIKKDKITDREMEIIRMTAQGMLPKSIARIENCSVKTVYTHRRNAEAKLYSKIYKLVP.

The 59-residue stretch at 138–196 folds into the HTH luxR-type domain; sequence KDIKKDKITDREMEIIRMTAQGMLPKSIARIENCSVKTVYTHRRNAEAKLYSKIYKLVP. The segment at residues 162-181 is a DNA-binding region (H-T-H motif); sequence PKSIARIENCSVKTVYTHRR.

The protein belongs to the EcpR/MatA family.

It localises to the cytoplasm. Part of the ecpRABCDE operon, which encodes the E.coli common pilus (ECP). ECP is found in both commensal and pathogenic strains and plays a dual role in early-stage biofilm development and host cell recognition. Positively regulates the expression of the ecp operon. This Escherichia coli O17:K52:H18 (strain UMN026 / ExPEC) protein is HTH-type transcriptional regulator EcpR (ecpR).